A 964-amino-acid chain; its full sequence is uncharacterized protein (964 aa).

Residues 97–117 (DSESDVGSDAESDAESDAESD) are compositionally biased toward acidic residues. The segment at 97–208 (DSESDVGSDA…SNSIDNESES (112 aa)) is disordered. The segment covering 121 to 148 (HTQNNTNTPINNITLINLDSSNNSTQSD) has biased composition (low complexity). The segment covering 149-163 (NESDNESDNESDNES) has biased composition (acidic residues). Residues 192–203 (NSDNIGNSNSID) show a composition bias toward low complexity.

This is an uncharacterized protein from Acanthamoeba polyphaga (Amoeba).